Consider the following 384-residue polypeptide: Histidinol-phosphate aminotransferase (384 aa).

The residue at position 223 (lysine 223) is an N6-(pyridoxal phosphate)lysine.

It belongs to the class-II pyridoxal-phosphate-dependent aminotransferase family. It depends on pyridoxal 5'-phosphate as a cofactor.

It catalyses the reaction L-histidinol phosphate + 2-oxoglutarate = 3-(imidazol-4-yl)-2-oxopropyl phosphate + L-glutamate. It functions in the pathway amino-acid biosynthesis; L-histidine biosynthesis; L-histidine from 5-phospho-alpha-D-ribose 1-diphosphate: step 7/9. The chain is Histidinol-phosphate aminotransferase (his3) from Schizosaccharomyces pombe (strain 972 / ATCC 24843) (Fission yeast).